The following is a 474-amino-acid chain: 3-isopropylmalate dehydratase large subunit (474 aa).

3 residues coordinate [4Fe-4S] cluster: Cys-355, Cys-415, and Cys-418.

The protein belongs to the aconitase/IPM isomerase family. LeuC type 1 subfamily. As to quaternary structure, heterodimer of LeuC and LeuD. Requires [4Fe-4S] cluster as cofactor.

The catalysed reaction is (2R,3S)-3-isopropylmalate = (2S)-2-isopropylmalate. Its pathway is amino-acid biosynthesis; L-leucine biosynthesis; L-leucine from 3-methyl-2-oxobutanoate: step 2/4. Its function is as follows. Catalyzes the isomerization between 2-isopropylmalate and 3-isopropylmalate, via the formation of 2-isopropylmaleate. The polypeptide is 3-isopropylmalate dehydratase large subunit (Shewanella sp. (strain MR-4)).